We begin with the raw amino-acid sequence, 639 residues long: CREB3 regulatory factor (639 aa).

The tract at residues 302–422 is disordered; the sequence is PLPQEGPGSL…SVEDLKEVTS (121 aa). Residues 310–328 show a composition bias toward low complexity; sequence SLAAGESSSLSASTSVSDS. Polar residues predominate over residues 339 to 351; sequence LFVSDNLGEQPTK. Acidic residues predominate over residues 355–370; sequence EEDEEDEEDVDDEDHD. Positions 371–380 are enriched in basic and acidic residues; sequence EGFGSEHELS. Residues 381–401 are compositionally biased toward acidic residues; sequence ENEEEEEEEEDYEDDKDDDIS. The region spanning 521–584 is the bZIP domain; the sequence is TARPRSRKEK…VNRVQNPRDE (64 aa). Residues 523–532 form a basic motif region; that stretch reads RPRSRKEKNK. Residues 533 to 540 form a leucine-zipper region; that stretch reads LASRACRL.

This sequence belongs to the bZIP family. CREBRF subfamily. In terms of assembly, interacts (via leucine-zipper domain) with CREB3 (via leucine-zipper domain); the interaction promotes CREB3 degradation. Post-translationally, probably degraded by the proteasome.

It is found in the nucleus. In terms of biological role, acts as a negative regulator of the endoplasmic reticulum stress response or unfolded protein response (UPR). Represses the transcriptional activity of CREB3 during the UPR. Recruits CREB3 into nuclear foci. This Homo sapiens (Human) protein is CREB3 regulatory factor (CREBRF).